The following is a 594-amino-acid chain: Dual specificity protein phosphatase CDC14A (594 aa).

The tract at residues 7–162 (ELIGACEFMK…GLQHGFFDFE (156 aa)) is a. The tract at residues 163–176 (TFDVDEYEHYERVE) is linker. The interval 177–343 (NGDFNWIVPG…QGDIFRSKLK (167 aa)) is b. The 158-residue stretch at 179–336 (DFNWIVPGKF…KQASLWVQGD (158 aa)) folds into the Tyrosine-protein phosphatase domain. The active-site Phosphocysteine intermediate is the Cys-278. The segment at 396 to 435 (GDKLRALKSQRQPRTSPSCAFRSDDTKGHPRAVSQPFRLS) is disordered. Residues 404-413 (SQRQPRTSPS) are compositionally biased toward polar residues. Ser-484 bears the Phosphoserine mark. A disordered region spans residues 487–560 (NLNAATDDPE…PGPHSAKTEE (74 aa)). The segment covering 500–531 (TSSSSKAGFTASPFTNLLNGSSQPTTRNYPEL) has biased composition (polar residues). The segment covering 532-549 (NNNQYNRSSNSNGGNLNS) has biased composition (low complexity). A Phosphoserine modification is found at Ser-583.

This sequence belongs to the protein-tyrosine phosphatase family. Non-receptor class CDC14 subfamily. Interacts with KIF20A, which is required to localize CDC14 to the midzone of the mitotic spindle.

The protein localises to the nucleus. It is found in the cytoplasm. Its subcellular location is the cytoskeleton. It localises to the microtubule organizing center. The protein resides in the centrosome. The protein localises to the spindle pole. It is found in the spindle. Its subcellular location is the cell projection. It localises to the kinocilium. The protein resides in the stereocilium. The catalysed reaction is O-phospho-L-tyrosyl-[protein] + H2O = L-tyrosyl-[protein] + phosphate. The enzyme catalyses O-phospho-L-seryl-[protein] + H2O = L-seryl-[protein] + phosphate. It catalyses the reaction O-phospho-L-threonyl-[protein] + H2O = L-threonyl-[protein] + phosphate. Functionally, dual-specificity phosphatase. Required for centrosome separation and productive cytokinesis during cell division. Dephosphorylates SIRT2 around early anaphase. May dephosphorylate the APC subunit FZR1/CDH1, thereby promoting APC-FZR1 dependent degradation of mitotic cyclins and subsequent exit from mitosis. Required for normal hearing. This chain is Dual specificity protein phosphatase CDC14A (CDC14A), found in Homo sapiens (Human).